The chain runs to 397 residues: ATP phosphoribosyltransferase regulatory subunit (397 aa).

It belongs to the class-II aminoacyl-tRNA synthetase family. HisZ subfamily. In terms of assembly, heteromultimer composed of HisG and HisZ subunits.

The protein localises to the cytoplasm. Its pathway is amino-acid biosynthesis; L-histidine biosynthesis; L-histidine from 5-phospho-alpha-D-ribose 1-diphosphate: step 1/9. Required for the first step of histidine biosynthesis. May allow the feedback regulation of ATP phosphoribosyltransferase activity by histidine. The protein is ATP phosphoribosyltransferase regulatory subunit of Halalkalibacterium halodurans (strain ATCC BAA-125 / DSM 18197 / FERM 7344 / JCM 9153 / C-125) (Bacillus halodurans).